The sequence spans 217 residues: Endo-1,4-beta-xylanase (217 aa).

The N-terminal stretch at 1–17 (MQFLIPVVILCVSLVDS) is a signal peptide. The 198-residue stretch at 20-217 (VLYNNEIGFN…SSGFADITVS (198 aa)) folds into the GH11 domain. N-linked (GlcNAc...) asparagine glycans are attached at residues N56 and N80. E107 serves as the catalytic Nucleophile. Residue E204 is the Proton donor of the active site.

The protein belongs to the glycosyl hydrolase 11 (cellulase G) family. In terms of tissue distribution, expressed in larval carcasses and gut, and adult gut.

The protein resides in the secreted. The catalysed reaction is Endohydrolysis of (1-&gt;4)-beta-D-xylosidic linkages in xylans.. It participates in glycan degradation; xylan degradation. The chain is Endo-1,4-beta-xylanase from Phaedon cochleariae (Mustard beetle).